A 368-amino-acid chain; its full sequence is CST complex subunit STN1 (368 aa).

The segment at 1 to 185 is interaction with CTC1; the sequence is MQPGSSRCEE…KVYDQPFHSS (185 aa). The OB DNA-binding region spans 57 to 155; the sequence is VDVLGTVIGV…EIHATTYYKV (99 aa). Winged helix-turn-helix (wHTH) stretches follow at residues 191-295 and 296-368; these read EALS…YVTR and EDKD…YTAF.

It belongs to the STN1 family. As to quaternary structure, component of the CST complex, composed of TEN1/C17orf106, CTC1/C17orf68 and STN1; in the complex interacts directly with TEN1 and CTC1. Interacts with ACD/TPP1, POT1 and POLA1.

The protein resides in the nucleus. The protein localises to the chromosome. Its subcellular location is the telomere. Component of the CST complex proposed to act as a specialized replication factor promoting DNA replication under conditions of replication stress or natural replication barriers such as the telomere duplex. The CST complex binds single-stranded DNA with high affinity in a sequence-independent manner, while isolated subunits bind DNA with low affinity by themselves. Initially the CST complex has been proposed to protect telomeres from DNA degradation. However, the CST complex has been shown to be involved in several aspects of telomere replication. The CST complex inhibits telomerase and is involved in telomere length homeostasis; it is proposed to bind to newly telomerase-synthesized 3' overhangs and to terminate telomerase action implicating the association with the ACD:POT1 complex thus interfering with its telomerase stimulation activity. The CST complex is also proposed to be involved in fill-in synthesis of the telomeric C-strand probably implicating recruitment and activation of DNA polymerase alpha. The CST complex facilitates recovery from many forms of exogenous DNA damage; seems to be involved in the re-initiation of DNA replication at repaired forks and/or dormant origins. Required for efficicient replication of the duplex region of the telomere. Promotes efficient replication of lagging-strand telomeres. Promotes general replication start following replication-fork stalling implicating new origin firing. May be in involved in C-strand fill-in during late S/G2 phase independent of its role in telomere duplex replication. Its function is as follows. Component of the CST complex, a complex that binds to single-stranded DNA and is required to protect telomeres from DNA degradation. The CST complex binds single-stranded DNA with high affinity in a sequence-independent manner, while isolated subunits bind DNA with low affinity by themselves. In addition to telomere protection, the CST complex has probably a more general role in DNA metabolism at non-telomeric sites. This chain is CST complex subunit STN1, found in Homo sapiens (Human).